Reading from the N-terminus, the 456-residue chain is Nitrogenase molybdenum-iron protein beta chain (456 aa).

Residues cysteine 23, cysteine 48, cysteine 106, and serine 141 each contribute to the [8Fe-7S] cluster site.

It belongs to the NifD/NifK/NifE/NifN family. In terms of assembly, tetramer of two alpha and two beta chains. Forms complex with the iron protein (nitrogenase component 2). [8Fe-7S] cluster is required as a cofactor.

It carries out the reaction N2 + 8 reduced [2Fe-2S]-[ferredoxin] + 16 ATP + 16 H2O = H2 + 8 oxidized [2Fe-2S]-[ferredoxin] + 2 NH4(+) + 16 ADP + 16 phosphate + 6 H(+). Its function is as follows. This molybdenum-iron protein is part of the nitrogenase complex that catalyzes the key enzymatic reactions in nitrogen fixation. The sequence is that of Nitrogenase molybdenum-iron protein beta chain (nifK2) from Methanosarcina barkeri.